The following is a 400-amino-acid chain: MSGRVGDLSPKQAETLAKFRENVQDVLPALPNPDDYFLLRWLRARNFDLQKSEAMLRKYMEFRKTMDIDHILDWQPPEVIQKYMPGGLCGYDRDGCPVWYDIIGPLDPKGLLFSVTKQDLLKTKMRDCERILHECDLQTERLGRKIETIVMIFDCEGLGLKHFWKPLVEVYQEFFGLLEENYPETLKFMLIVKATKLFPVGYNLMKPFLSEDTRRKIVVLGNSWKEGLLKLISPEELPAHFGGTLTDPDGNPKCLTKINYGGEIPKSMYVRDQVKTQYEHSVQISRGSSHQVEYEILFPGCVLRWQFSSDGADIGFGVFLKTKMGERQKAGEMTEVLTSQRYNAHMVPEDGSLTCTEAGVYVLRFDNTYSFVHAKKVSFTVEVLLPDEGMQKYDEELTPI.

In terms of domain architecture, CRAL-TRIO spans 76-249 (PPEVIQKYMP…HFGGTLTDPD (174 aa)). Serine 223 is modified (phosphoserine). A GOLD domain is found at 275 to 383 (KTQYEHSVQI…AKKVSFTVEV (109 aa)).

The N-terminus seems to be blocked. In terms of tissue distribution, detected in a layer of supportive cells in olfactory epithelium, in the apical region of the trachea and in the surface layer of ciliated bronchial epithelium in the lung.

Its function is as follows. Probable hydrophobic ligand-binding protein; may play a role in the transport of hydrophobic ligands like tocopherol, squalene and phospholipids. This Rattus norvegicus (Rat) protein is SEC14-like protein 3 (Sec14l3).